We begin with the raw amino-acid sequence, 61 residues long: Conotoxin TxMRCL-04 (61 aa).

Positions 1–22 (MRCLPVFVILLLLIASTPSVDA) are cleaved as a signal peptide. The propeptide occupies 23-46 (QLKTKDDMSLASFHDNVKRILQIR).

It belongs to the conotoxin T superfamily. Contains 2 disulfide bonds that can be either 'C1-C3, C2-C4' or 'C1-C4, C2-C3', since these disulfide connectivities have been observed for conotoxins with cysteine framework V (for examples, see AC P0DQQ7 and AC P81755). In terms of tissue distribution, expressed by the venom duct.

The protein localises to the secreted. This is Conotoxin TxMRCL-04 from Conus textile (Cloth-of-gold cone).